The chain runs to 442 residues: Chromosomal replication initiator protein DnaA (442 aa).

A domain I, interacts with DnaA modulators region spans residues 1 to 68 (MDAWPRCLER…ELLAYFVGNG (68 aa)). The domain II stretch occupies residues 68 to 104 (GDVALAVGSRPRAPEPAPAPVAVPSAPQAAPIVPFAG). Residues 105–322 (NLDSHYTFAN…GALNTLVARA (218 aa)) form a domain III, AAA+ region region. ATP contacts are provided by G150, G152, K153, and T154. The segment at 323–442 (NFTGRSITVE…WEKLIRKLSE (120 aa)) is domain IV, binds dsDNA.

Belongs to the DnaA family. Oligomerizes as a right-handed, spiral filament on DNA at oriC.

Its subcellular location is the cytoplasm. Functionally, plays an essential role in the initiation and regulation of chromosomal replication. ATP-DnaA binds to the origin of replication (oriC) to initiate formation of the DNA replication initiation complex once per cell cycle. Binds the DnaA box (a 9 base pair repeat at the origin) and separates the double-stranded (ds)DNA. Forms a right-handed helical filament on oriC DNA; dsDNA binds to the exterior of the filament while single-stranded (ss)DNA is stabiized in the filament's interior. The ATP-DnaA-oriC complex binds and stabilizes one strand of the AT-rich DNA unwinding element (DUE), permitting loading of DNA polymerase. After initiation quickly degrades to an ADP-DnaA complex that is not apt for DNA replication. Binds acidic phospholipids. This is Chromosomal replication initiator protein DnaA from Xanthomonas axonopodis pv. citri (strain 306).